We begin with the raw amino-acid sequence, 248 residues long: UPF0736 protein Bcer98_0893 (248 aa).

Belongs to the UPF0736 family.

In Bacillus cytotoxicus (strain DSM 22905 / CIP 110041 / 391-98 / NVH 391-98), this protein is UPF0736 protein Bcer98_0893.